Reading from the N-terminus, the 199-residue chain is uncharacterized protein (199 aa).

A run of 4 helical transmembrane segments spans residues 40–60 (LLIC…FCFL), 86–106 (VLTG…TFPF), 117–137 (TSWP…LTSS), and 166–186 (FLLA…ALIL).

The protein resides in the membrane. This is an uncharacterized protein from Saccharomyces cerevisiae (strain ATCC 204508 / S288c) (Baker's yeast).